A 282-amino-acid chain; its full sequence is ATP phosphoribosyltransferase (282 aa).

It belongs to the ATP phosphoribosyltransferase family. Long subfamily. Requires Mg(2+) as cofactor.

Its subcellular location is the cytoplasm. It catalyses the reaction 1-(5-phospho-beta-D-ribosyl)-ATP + diphosphate = 5-phospho-alpha-D-ribose 1-diphosphate + ATP. It functions in the pathway amino-acid biosynthesis; L-histidine biosynthesis; L-histidine from 5-phospho-alpha-D-ribose 1-diphosphate: step 1/9. Its activity is regulated as follows. Feedback inhibited by histidine. Its function is as follows. Catalyzes the condensation of ATP and 5-phosphoribose 1-diphosphate to form N'-(5'-phosphoribosyl)-ATP (PR-ATP). Has a crucial role in the pathway because the rate of histidine biosynthesis seems to be controlled primarily by regulation of HisG enzymatic activity. The polypeptide is ATP phosphoribosyltransferase (Pyrobaculum islandicum (strain DSM 4184 / JCM 9189 / GEO3)).